A 712-amino-acid polypeptide reads, in one-letter code: Lactoperoxidase (712 aa).

An N-terminal signal peptide occupies residues 1–22; sequence MWVCLQLPVFLASVTLFEVAAS. A propeptide spanning residues 23 to 100 is cleaved from the precursor; it reads DTIAQAASTT…WEESFKRLRR (78 aa). A glycan (N-linked (GlcNAc...) (complex) asparagine; alternate) is linked at N106. The N-linked (GlcNAc...) (hybrid) asparagine; alternate glycan is linked to N106. Intrachain disulfides connect C123–C284, C132–C145, C246–C256, and C250–C274. N212 carries N-linked (GlcNAc...) (complex) asparagine; alternate glycosylation. N212 carries N-linked (GlcNAc...) (high mannose) asparagine; alternate glycosylation. D225 is a binding site for heme b. H226 serves as the catalytic Proton acceptor. D227 provides a ligand contact to Ca(2+). Ca(2+) is bound by residues T301, F303, D305, and S307. S315 carries the post-translational modification Phosphoserine. N-linked (GlcNAc...) (high mannose) asparagine glycosylation occurs at N322. C354 and C365 are disulfide-bonded. The N-linked (GlcNAc...) asparagine glycan is linked to N358. E375 contributes to the heme b binding site. N-linked (GlcNAc...) (complex) asparagine; alternate glycosylation occurs at N449. N-linked (GlcNAc...) (hybrid) asparagine; alternate glycosylation is present at N449. The N-linked (GlcNAc...) (high mannose) asparagine; alternate glycan is linked to N449. Heme b is bound at residue H468. At Y482 the chain carries 3'-nitrotyrosine. Disulfide bonds link C573–C630 and C671–C696.

This sequence belongs to the peroxidase family. XPO subfamily. Ca(2+) is required as a cofactor. The cofactor is heme b. Mammary gland; milk.

The protein localises to the secreted. It localises to the cytoplasm. The catalysed reaction is 2 a phenolic donor + H2O2 = 2 a phenolic radical donor + 2 H2O. The enzyme catalyses thiocyanate + H2O2 + H(+) = hypothiocyanous acid + H2O. It catalyses the reaction iodide + H2O2 = hypoiodite + H2O. Heme-containing oxidoreductase which catalyzes the conversion of thiocyanate (SCN(-)) into antimicrobial agent hypothiocyanous acid (OSCN(-)) in the presence of hydrogen peroxide (H2O2). Also involved in the conversion of iodide (I(-)) into hypoiodite (IO(-)) in the presence of H2O2. Responsible for the inactivation of a wide range of micro-organisms and hence, important component of defense mechanism. Shows antibacterial properties against E.coli, K.pneumoniae, P.aeruginosa, S.sonnei, S.saphrophyticus, S.epidermidis and S.dysenteriae. May protect the udder from infection and may promote growth in newborns. May be implicated in airway host defense against infection. May contribute to maintaining an appropriate H2O2 cellular level, therefore protecting cells from H2O2-caused injuries and inflammation. In Bubalus bubalis (Domestic water buffalo), this protein is Lactoperoxidase.